Consider the following 207-residue polypeptide: Large ribosomal subunit protein uL4 (207 aa).

The interval 52-76 is disordered; it reads KNTSLVSGGGKKPWKQKGTGRARQG.

Belongs to the universal ribosomal protein uL4 family. In terms of assembly, part of the 50S ribosomal subunit.

In terms of biological role, one of the primary rRNA binding proteins, this protein initially binds near the 5'-end of the 23S rRNA. It is important during the early stages of 50S assembly. It makes multiple contacts with different domains of the 23S rRNA in the assembled 50S subunit and ribosome. Functionally, forms part of the polypeptide exit tunnel. This chain is Large ribosomal subunit protein uL4, found in Myxococcus xanthus (strain DK1622).